Here is a 452-residue protein sequence, read N- to C-terminus: Maltoporin (452 aa).

Residues 1–25 (MMITLRKLPLAVAVAAGVMSAQAMA) form the signal peptide.

It belongs to the porin LamB (TC 1.B.3) family. In terms of assembly, homotrimer formed of three 18-stranded antiparallel beta-barrels, containing three independent channels.

It is found in the cell outer membrane. It carries out the reaction beta-maltose(in) = beta-maltose(out). Its function is as follows. Involved in the transport of maltose and maltodextrins. The chain is Maltoporin from Salmonella enteritidis PT4 (strain P125109).